We begin with the raw amino-acid sequence, 108 residues long: Ribonuclease P protein component 4 (108 aa).

C67, C70, C93, and C96 together coordinate Zn(2+).

Belongs to the eukaryotic/archaeal RNase P protein component 4 family. In terms of assembly, consists of a catalytic RNA component and at least 4-5 protein subunits. Zn(2+) is required as a cofactor.

Its subcellular location is the cytoplasm. It catalyses the reaction Endonucleolytic cleavage of RNA, removing 5'-extranucleotides from tRNA precursor.. Functionally, part of ribonuclease P, a protein complex that generates mature tRNA molecules by cleaving their 5'-ends. The chain is Ribonuclease P protein component 4 from Methanococcoides burtonii (strain DSM 6242 / NBRC 107633 / OCM 468 / ACE-M).